Reading from the N-terminus, the 343-residue chain is Ferrochelatase (343 aa).

2 residues coordinate Fe cation: histidine 191 and glutamate 270.

The protein belongs to the ferrochelatase family.

Its subcellular location is the cytoplasm. It catalyses the reaction heme b + 2 H(+) = protoporphyrin IX + Fe(2+). The protein operates within porphyrin-containing compound metabolism; protoheme biosynthesis; protoheme from protoporphyrin-IX: step 1/1. Catalyzes the ferrous insertion into protoporphyrin IX. This chain is Ferrochelatase, found in Phenylobacterium zucineum (strain HLK1).